A 299-amino-acid polypeptide reads, in one-letter code: Glycine--tRNA ligase alpha subunit (299 aa).

It belongs to the class-II aminoacyl-tRNA synthetase family. As to quaternary structure, tetramer of two alpha and two beta subunits.

It localises to the cytoplasm. It catalyses the reaction tRNA(Gly) + glycine + ATP = glycyl-tRNA(Gly) + AMP + diphosphate. The sequence is that of Glycine--tRNA ligase alpha subunit from Laribacter hongkongensis (strain HLHK9).